The chain runs to 510 residues: MIWHVQNENFILDSTRIFMKAFHLLLFHGSFIFPECILIFGLILLLMIDSTSDQKDIPWLYFISSTSLVMSITALLFRWREEPMISFSGNFQTNNFNEIFQFLILLCSTLCIPLSVEYIECTEMAITEFLLFVLTATLGGMFLCGANDSITIFVAPECFSLCSYLLSGYTKRDVRSNEATTKYLLMGGASSSILVHGFSWLYGSSGGEIELQEIVNGLINTQMYNSPGISIALISITVGIGFKLSPAPSHQWTPDVYEGSPTPVVAFLSVTSKVAASASATRIFDIPFYFSSNEWHLLLEILAILSMILGNLIAITQTSMKRMLAYSSIGQIGYVIIGIIVGDSNDGYASMITYMLFYISMNLGTFARIVSFGLRTGTDNIRDYAGLYTKDPFLALSSALCLLSLGGLPPLAGFFGKLHLFWCGWQAGLYFLVSIGLLTSVVSIYYYLKIIKLLMTGRNQEITPHVRNYRRSPLRSNNSIELSMIVCVIASTIPGISMNPIIAIAQDTLF.

13 helical membrane passes run 24–44 (LLLF…GLIL), 57–77 (IPWL…ALLF), 99–119 (IFQF…VEYI), 124–144 (MAIT…MFLC), 150–170 (ITIF…SGYT), 183–203 (YLLM…WLYG), 227–247 (PGIS…LSPA), 295–315 (WHLL…LIAI), 323–343 (MLAY…IVGD), 347–367 (GYAS…GTFA), 395–415 (ALSS…AGFF), 418–438 (LHLF…IGLL), and 484–504 (MIVC…IIAI).

It belongs to the complex I subunit 2 family. NDH is composed of at least 16 different subunits, 5 of which are encoded in the nucleus.

The protein resides in the plastid. It is found in the chloroplast thylakoid membrane. It carries out the reaction a plastoquinone + NADH + (n+1) H(+)(in) = a plastoquinol + NAD(+) + n H(+)(out). The enzyme catalyses a plastoquinone + NADPH + (n+1) H(+)(in) = a plastoquinol + NADP(+) + n H(+)(out). Its function is as follows. NDH shuttles electrons from NAD(P)H:plastoquinone, via FMN and iron-sulfur (Fe-S) centers, to quinones in the photosynthetic chain and possibly in a chloroplast respiratory chain. The immediate electron acceptor for the enzyme in this species is believed to be plastoquinone. Couples the redox reaction to proton translocation, and thus conserves the redox energy in a proton gradient. The chain is NAD(P)H-quinone oxidoreductase subunit 2 B, chloroplastic from Chloranthus spicatus (Chulantree).